The chain runs to 530 residues: Probable flavin-containing monooxygenase 1 (530 aa).

FAD-binding positions include 17-21 (GAGVS), glutamate 38, 46-47 (VW), and 58-59 (QS). 219–222 (SAID) contributes to the NADP(+) binding site.

It belongs to the FMO family. Requires FAD as cofactor.

Its function is as follows. Required for the establishment of systemic acquired resistance (SAR). Not involved in local defense mechanisms. Confers a salicylic acid-dependent (SA) resistance to virulent pathogens such as P.syringae pv tomato and H.parasitica. This is Probable flavin-containing monooxygenase 1 (FMO1) from Arabidopsis thaliana (Mouse-ear cress).